Consider the following 130-residue polypeptide: Small ribosomal subunit protein uS11c (130 aa).

This sequence belongs to the universal ribosomal protein uS11 family. In terms of assembly, part of the 30S ribosomal subunit.

The protein resides in the plastid. It localises to the chloroplast. The protein is Small ribosomal subunit protein uS11c of Angiopteris evecta (Mule's foot fern).